A 346-amino-acid polypeptide reads, in one-letter code: S-adenosylmethionine:tRNA ribosyltransferase-isomerase (346 aa).

It belongs to the QueA family. Monomer.

It localises to the cytoplasm. The catalysed reaction is 7-aminomethyl-7-carbaguanosine(34) in tRNA + S-adenosyl-L-methionine = epoxyqueuosine(34) in tRNA + adenine + L-methionine + 2 H(+). The protein operates within tRNA modification; tRNA-queuosine biosynthesis. Transfers and isomerizes the ribose moiety from AdoMet to the 7-aminomethyl group of 7-deazaguanine (preQ1-tRNA) to give epoxyqueuosine (oQ-tRNA). This chain is S-adenosylmethionine:tRNA ribosyltransferase-isomerase, found in Borreliella afzelii (strain PKo) (Borrelia afzelii).